A 424-amino-acid chain; its full sequence is MGPVWLWLWLLVAEVLLPVHCQPFSAHGDKSLGASQPASHQSLEPAPAYHKVTPTITNFALRLYKQLAEEVAGNILFSPVSLSSSLALLSLGAHADTQTQILESLGFNLTETPAADVHRGFQSLLHTLDLPSPKLELKLGHSLFLDRQLKPQQRFLDSAKELYGALAFSANFTEAAATGQQINDLVRKQTYGQVVGCLPEFSHDTLMVLLNYIFFKAKWKHPFDRYQTRKQESFSLDQRTPLRIPMMRQKEMHRFLYDQEASCTVLQIEYSGTALLLLVLPDPGKMQQVEAALQPETLRRWGQRFLPSLLDLHLPRFSISATYNLEEILPLIGLGNLFDMEADLSGIMGQLNKTVSRVSHKAIVDMNEKGTEAAAASGLLSQPPALNMTSAPQAHYNRPFLLLLWEVTTQSLLFLGKVVNPAAG.

The first 21 residues, 1–21 (MGPVWLWLWLLVAEVLLPVHC), serve as a signal peptide directing secretion. Residues asparagine 108, asparagine 171, asparagine 352, and asparagine 387 are each glycosylated (N-linked (GlcNAc...) asparagine).

It belongs to the serpin family.

It is found in the secreted. The polypeptide is Serpin A11 (Serpina11) (Mus musculus (Mouse)).